Here is a 338-residue protein sequence, read N- to C-terminus: Ketol-acid reductoisomerase (NADP(+)) (338 aa).

The region spanning 2–182 is the KARI N-terminal Rossmann domain; it reads TKMYYEEDTD…GGARAGVLET (181 aa). NADP(+) is bound by residues 25–28, Ser51, Ser53, and 83–86; these read YGSQ and DELQ. The active site involves His108. Gly134 contributes to the NADP(+) binding site. In terms of domain architecture, KARI C-terminal knotted spans 183 to 330; it reads TFRTETETDL…SEIRKLYCWN (148 aa). Residues Asp191, Glu195, Glu227, and Glu231 each contribute to the Mg(2+) site. A substrate-binding site is contributed by Ser252.

The protein belongs to the ketol-acid reductoisomerase family. The cofactor is Mg(2+).

The enzyme catalyses (2R)-2,3-dihydroxy-3-methylbutanoate + NADP(+) = (2S)-2-acetolactate + NADPH + H(+). It catalyses the reaction (2R,3R)-2,3-dihydroxy-3-methylpentanoate + NADP(+) = (S)-2-ethyl-2-hydroxy-3-oxobutanoate + NADPH + H(+). The protein operates within amino-acid biosynthesis; L-isoleucine biosynthesis; L-isoleucine from 2-oxobutanoate: step 2/4. It functions in the pathway amino-acid biosynthesis; L-valine biosynthesis; L-valine from pyruvate: step 2/4. Functionally, involved in the biosynthesis of branched-chain amino acids (BCAA). Catalyzes an alkyl-migration followed by a ketol-acid reduction of (S)-2-acetolactate (S2AL) to yield (R)-2,3-dihydroxy-isovalerate. In the isomerase reaction, S2AL is rearranged via a Mg-dependent methyl migration to produce 3-hydroxy-3-methyl-2-ketobutyrate (HMKB). In the reductase reaction, this 2-ketoacid undergoes a metal-dependent reduction by NADPH to yield (R)-2,3-dihydroxy-isovalerate. In Clostridium botulinum (strain Eklund 17B / Type B), this protein is Ketol-acid reductoisomerase (NADP(+)).